The chain runs to 158 residues: NAD(P)H-quinone oxidoreductase subunit J, chloroplastic (158 aa).

It belongs to the complex I 30 kDa subunit family. NDH is composed of at least 16 different subunits, 5 of which are encoded in the nucleus.

Its subcellular location is the plastid. It localises to the chloroplast thylakoid membrane. It carries out the reaction a plastoquinone + NADH + (n+1) H(+)(in) = a plastoquinol + NAD(+) + n H(+)(out). The enzyme catalyses a plastoquinone + NADPH + (n+1) H(+)(in) = a plastoquinol + NADP(+) + n H(+)(out). Functionally, NDH shuttles electrons from NAD(P)H:plastoquinone, via FMN and iron-sulfur (Fe-S) centers, to quinones in the photosynthetic chain and possibly in a chloroplast respiratory chain. The immediate electron acceptor for the enzyme in this species is believed to be plastoquinone. Couples the redox reaction to proton translocation, and thus conserves the redox energy in a proton gradient. The sequence is that of NAD(P)H-quinone oxidoreductase subunit J, chloroplastic from Ceratophyllum demersum (Rigid hornwort).